The chain runs to 507 residues: tRNA-2-methylthio-N(6)-dimethylallyladenosine synthase (507 aa).

One can recognise an MTTase N-terminal domain in the interval 13–129 (RTYQVRTYGC…LPALLERARH (117 aa)). Residues C22, C58, C92, C166, C170, and C173 each contribute to the [4Fe-4S] cluster site. The 237-residue stretch at 152-388 (RESAYAAWVS…IALQESVTLE (237 aa)) folds into the Radical SAM core domain. The region spanning 391–462 (QKQIGRMIEV…PHHLIADDGV (72 aa)) is the TRAM domain. The span at 459 to 478 (DDGVRSHRRTRAGDAHEAGK) shows a compositional bias: basic and acidic residues. Residues 459–492 (DDGVRSHRRTRAGDAHEAGKKPSTPGIGLGMPAI) are disordered.

This sequence belongs to the methylthiotransferase family. MiaB subfamily. As to quaternary structure, monomer. It depends on [4Fe-4S] cluster as a cofactor.

Its subcellular location is the cytoplasm. The catalysed reaction is N(6)-dimethylallyladenosine(37) in tRNA + (sulfur carrier)-SH + AH2 + 2 S-adenosyl-L-methionine = 2-methylsulfanyl-N(6)-dimethylallyladenosine(37) in tRNA + (sulfur carrier)-H + 5'-deoxyadenosine + L-methionine + A + S-adenosyl-L-homocysteine + 2 H(+). Catalyzes the methylthiolation of N6-(dimethylallyl)adenosine (i(6)A), leading to the formation of 2-methylthio-N6-(dimethylallyl)adenosine (ms(2)i(6)A) at position 37 in tRNAs that read codons beginning with uridine. The polypeptide is tRNA-2-methylthio-N(6)-dimethylallyladenosine synthase (Mycobacteroides abscessus (strain ATCC 19977 / DSM 44196 / CCUG 20993 / CIP 104536 / JCM 13569 / NCTC 13031 / TMC 1543 / L948) (Mycobacterium abscessus)).